The sequence spans 284 residues: Putative thiosulfate sulfurtransferase SseB (284 aa).

2 Rhodanese domains span residues 20 to 138 (AGDP…SIET) and 169 to 280 (GAGG…RPVG). Arginine 183 serves as a coordination point for substrate. The Cysteine persulfide intermediate role is filled by cysteine 241.

It catalyses the reaction thiosulfate + hydrogen cyanide = thiocyanate + sulfite + 2 H(+). This chain is Putative thiosulfate sulfurtransferase SseB (sseB), found in Mycobacterium tuberculosis (strain CDC 1551 / Oshkosh).